A 204-amino-acid chain; its full sequence is dITP/XTP pyrophosphatase (204 aa).

Position 11–16 (11–16) interacts with substrate; sequence SRNRKK. The active-site Proton acceptor is Asp76. A Mg(2+)-binding site is contributed by Asp76. Substrate contacts are provided by residues Ser77, 158–161, Lys181, and 186–187; these read FGYD and HR.

The protein belongs to the HAM1 NTPase family. As to quaternary structure, homodimer. Requires Mg(2+) as cofactor.

It catalyses the reaction XTP + H2O = XMP + diphosphate + H(+). It carries out the reaction dITP + H2O = dIMP + diphosphate + H(+). The catalysed reaction is ITP + H2O = IMP + diphosphate + H(+). Functionally, pyrophosphatase that catalyzes the hydrolysis of nucleoside triphosphates to their monophosphate derivatives, with a high preference for the non-canonical purine nucleotides XTP (xanthosine triphosphate), dITP (deoxyinosine triphosphate) and ITP. Seems to function as a house-cleaning enzyme that removes non-canonical purine nucleotides from the nucleotide pool, thus preventing their incorporation into DNA/RNA and avoiding chromosomal lesions. This is dITP/XTP pyrophosphatase from Mycobacterium tuberculosis (strain CDC 1551 / Oshkosh).